The following is a 52-amino-acid chain: UPF0181 protein HI_1434.2 (52 aa).

This sequence belongs to the UPF0181 family.

The protein is UPF0181 protein HI_1434.2 of Haemophilus influenzae (strain ATCC 51907 / DSM 11121 / KW20 / Rd).